The primary structure comprises 136 residues: Polyadenylate-binding protein-interacting protein 2B (136 aa).

Polar residues predominate over residues 15–25 (NGSSVASTSPS). 2 disordered regions span residues 15–40 (NGSS…HEEK) and 107–136 (SVGD…GVKY). A compositionally biased stretch (basic and acidic residues) spans 27–40 (KCKEDQGLNGHEEK).

The protein belongs to the PAIP2 family. Interacts (via central acidic portion and C-terminus) with PABPC1 (via the second and third RRM domains and the C-terminus). Post-translationally, ubiquitinated in vitro. In terms of tissue distribution, expressed at very high levels in pancreas, at high levels in testis and at moderately high levels in brain, heart and lung (at protein level).

Inhibits translation of capped and polyadenylated mRNAs by displacing PABPC1 from the poly(A) tail. This is Polyadenylate-binding protein-interacting protein 2B (Paip2b) from Mus musculus (Mouse).